Consider the following 263-residue polypeptide: Glucosamine-6-phosphate deaminase 2 (263 aa).

The Proton acceptor; for enolization step role is filled by Asp-82. The active-site For ring-opening step is Asn-151. The active-site Proton acceptor; for ring-opening step is the His-153. The active-site For ring-opening step is the Glu-158.

It belongs to the glucosamine/galactosamine-6-phosphate isomerase family. As to quaternary structure, homohexamer.

It catalyses the reaction alpha-D-glucosamine 6-phosphate + H2O = beta-D-fructose 6-phosphate + NH4(+). In terms of biological role, catalyzes the reversible conversion of alpha-D-glucosamine 6-phosphate (GlcN-6P) into beta-D-fructose 6-phosphate (Fru-6P) and ammonium ion, a regulatory reaction step in de novo uridine diphosphate-N-acetyl-alpha-D-glucosamine (UDP-GlcNAc) biosynthesis via hexosamine pathway. This chain is Glucosamine-6-phosphate deaminase 2 (GPI2), found in Giardia intestinalis (Giardia lamblia).